The chain runs to 81 residues: RNA-binding protein Hfq (81 aa).

A Sm domain is found at 10–69 (DPFLNTLRKEHVPVSIYLVNGIKLQGQVDSFDQYVILLKNTVTQMVYKHAISTIVPGRAV).

Belongs to the Hfq family. In terms of assembly, homohexamer.

Functionally, RNA chaperone that binds small regulatory RNA (sRNAs) and mRNAs to facilitate mRNA translational regulation in response to envelope stress, environmental stress and changes in metabolite concentrations. Also binds with high specificity to tRNAs. In Methylobacillus flagellatus (strain ATCC 51484 / DSM 6875 / VKM B-1610 / KT), this protein is RNA-binding protein Hfq.